We begin with the raw amino-acid sequence, 620 residues long: Somatic embryogenesis receptor kinase 4 (620 aa).

The N-terminal stretch at 1 to 33 (MTSSKMEQRSLLCFLYLLLLFNFTLRVAGNAEG) is a signal peptide. Topologically, residues 34–234 (DALTQLKNSL…GGQMTAAIAG (201 aa)) are extracellular. LRR repeat units lie at residues 100–122 (NLQY…LGDL), 124–146 (ELVS…LGKL), 148–170 (KLRF…LTSV), 171–193 (QLQV…GSFS), and 194–215 (LFTP…PPTS). N-linked (GlcNAc...) asparagine glycosylation is present at Asn-110. 3 N-linked (GlcNAc...) asparagine glycosylation sites follow: Asn-156, Asn-189, and Asn-202. The disordered stretch occupies residues 205 to 227 (LTDLPEPPPTSTSPTPPPPSGGQ). Pro residues predominate over residues 209-224 (PEPPPTSTSPTPPPPS). A helical membrane pass occupies residues 235–255 (GVAAGAALLFAVPAIAFAWWL). Topologically, residues 256–620 (RRKPQDHFFD…IENDYPSGPR (365 aa)) are cytoplasmic. Residue Thr-291 is modified to Phosphothreonine. A Protein kinase domain is found at 294–591 (FSNKNVLGRG…KEEMPIHDFN (298 aa)). Residue Ser-295 is modified to Phosphoserine. ATP contacts are provided by residues 300-308 (LGRGGFGKV) and Lys-322. A phosphoserine mark is found at Ser-375 and Ser-378. The Proton acceptor role is filled by Asp-421. A phosphothreonine mark is found at Thr-454, Thr-455, and Thr-460. Tyr-468 carries the phosphotyrosine modification. Position 470 is a phosphoserine (Ser-470). Thr-471 bears the Phosphothreonine mark. Ser-475 is modified (phosphoserine). Thr-551 carries the phosphothreonine modification.

It belongs to the protein kinase superfamily. Ser/Thr protein kinase family. In terms of assembly, interacts with the EF-Tu receptor EFR and FLS2 in a specific ligand-induced manner. Interacts with TMK4/BARK1. Interacts with ERECTA in a EPF2-induced manner. Interacts with ERL1 in a EPF1-induced manner. Interacts with TMM. Forms a complex with MIK2 in response to SCOOP12 perception. Post-translationally, autophosphorylated on Thr and Tyr residues.

It is found in the cell membrane. It carries out the reaction L-seryl-[protein] + ATP = O-phospho-L-seryl-[protein] + ADP + H(+). The enzyme catalyses L-threonyl-[protein] + ATP = O-phospho-L-threonyl-[protein] + ADP + H(+). It catalyses the reaction L-tyrosyl-[protein] + ATP = O-phospho-L-tyrosyl-[protein] + ADP + H(+). Its function is as follows. Dual specificity kinase acting on both serine/threonine- and tyrosine-containing substrates. Positively regulates the BR-dependent plant growth pathway and negatively regulates the BR-independent cell-death pathway. Required during SCOOP small peptides (e.g. SCOOP10 and SCOOP12) perception and signaling; associates with MIK2 as a coreceptor upon MIK2 perception of SCOOP peptides, and relays the signaling through the activation of receptor-like cytosolic kinases (RLCKs) BIK1 and PBL1. In Arabidopsis thaliana (Mouse-ear cress), this protein is Somatic embryogenesis receptor kinase 4.